The chain runs to 195 residues: Myelin-associated neurite-outgrowth inhibitor (195 aa).

Position 1 is an N-acetylmethionine (methionine 1). The Cytoplasmic portion of the chain corresponds to 1–18; the sequence is MNPVYSPGSSGVPYANAK. Serine 6 bears the Phosphoserine mark. A helical membrane pass occupies residues 19-42; sequence GIGYPAGFPMGYAAAAPAYSPNMY. Over 43-142 the chain is Extracellular; that stretch reads PGANPTFQAG…PAPLPPPRGN (100 aa). Asparagine 46 carries an N-linked (GlcNAc...) asparagine glycan. The helical transmembrane segment at 143 to 164 threads the bilayer; that stretch reads GVTMGMVAGTTMAMSAGTLLTA. The Cytoplasmic segment spans residues 165 to 195; the sequence is HSPTPVAPHPVTVPTYRAPGTPTYSYVPPQW.

The protein belongs to the FAM168 family. As to quaternary structure, may form homodimers. May interact with DAZAP2, FAM168A, PRDX6, RBM6, TMTC1 and YPEL2. Interacts with CDC27. In terms of processing, N-glycosylated.

The protein localises to the cytoplasm. Its subcellular location is the perinuclear region. It is found in the cell membrane. The protein resides in the cell projection. It localises to the axon. In terms of biological role, inhibitor of neuronal axonal outgrowth. Acts as a negative regulator of CDC42 and STAT3 and a positive regulator of STMN2. Positive regulator of CDC27. The sequence is that of Myelin-associated neurite-outgrowth inhibitor (FAM168B) from Bos taurus (Bovine).